The following is a 204-amino-acid chain: Large ribosomal subunit protein bL25 (204 aa).

It belongs to the bacterial ribosomal protein bL25 family. CTC subfamily. As to quaternary structure, part of the 50S ribosomal subunit; part of the 5S rRNA/L5/L18/L25 subcomplex. Contacts the 5S rRNA. Binds to the 5S rRNA independently of L5 and L18.

This is one of the proteins that binds to the 5S RNA in the ribosome where it forms part of the central protuberance. The sequence is that of Large ribosomal subunit protein bL25 from Pseudomonas aeruginosa (strain LESB58).